Here is a 269-residue protein sequence, read N- to C-terminus: Surfeit locus protein 4 (269 aa).

A run of 5 helical transmembrane segments spans residues 64–84 (LLAS…CILV), 92–112 (YACF…SILW), 179–199 (FFSI…AIGF), 203–223 (LAAL…NAFW), and 239–259 (FFQT…GPGG). The Di-lysine motif signature appears at 266-269 (KKEW).

It belongs to the SURF4 family. In terms of assembly, found in a complex composed at least of SURF4, TMED2 and TMED10. May interact with LMAN1. Interacts with ZFYVE27 and with KIF5A in a ZFYVE27-dependent manner. Interacts with STING1. Interacts with SAR1B. Interacts with TMEM41B.

The protein localises to the endoplasmic reticulum membrane. It is found in the endoplasmic reticulum-Golgi intermediate compartment membrane. Its subcellular location is the golgi apparatus membrane. Endoplasmic reticulum cargo receptor that mediates the export of lipoproteins by recruiting cargos into COPII vesicles to facilitate their secretion. Acts as a cargo receptor for lipoproteins bearing both APOB and APOA1, thereby regulating lipoprotein delivery and the maintenance of lipid homeostasis. Synergizes with the GTPase SAR1B to mediate transport of circulating lipoproteins. Promotes the secretion of PCSK9. Also mediates the efficient secretion of erythropoietin (EPO). May also play a role in the maintenance of the architecture of the endoplasmic reticulum-Golgi intermediate compartment and of the Golgi. The sequence is that of Surfeit locus protein 4 from Bos taurus (Bovine).